Here is a 338-residue protein sequence, read N- to C-terminus: D-erythrose-4-phosphate dehydrogenase (338 aa).

Residue 11-12 (RI) coordinates NAD(+). Substrate contacts are provided by residues 153 to 155 (SCT), Arg199, 212 to 213 (TK), and Arg235. Cys154 (nucleophile) is an active-site residue. Asn317 is an NAD(+) binding site.

This sequence belongs to the glyceraldehyde-3-phosphate dehydrogenase family. Epd subfamily. As to quaternary structure, homotetramer.

The protein resides in the cytoplasm. The catalysed reaction is D-erythrose 4-phosphate + NAD(+) + H2O = 4-phospho-D-erythronate + NADH + 2 H(+). Its pathway is cofactor biosynthesis; pyridoxine 5'-phosphate biosynthesis; pyridoxine 5'-phosphate from D-erythrose 4-phosphate: step 1/5. Catalyzes the NAD-dependent conversion of D-erythrose 4-phosphate to 4-phosphoerythronate. The polypeptide is D-erythrose-4-phosphate dehydrogenase (Shewanella amazonensis (strain ATCC BAA-1098 / SB2B)).